A 389-amino-acid polypeptide reads, in one-letter code: Maintenance of mitochondrial morphology protein 1-1 (389 aa).

Residues Met-1–Gly-22 are Lumenal-facing. A helical transmembrane segment spans residues Phe-23–Phe-43. At Ser-44–Arg-389 the chain is on the cytoplasmic side. One can recognise an SMP-LTD domain in the interval Gln-83–Pro-278. 2 disordered regions span residues Lys-283 to Ile-345 and Phe-360 to Arg-389. The span at Met-330–Asn-341 shows a compositional bias: polar residues.

It belongs to the MMM1 family. Homodimer. Component of the ER-mitochondria encounter structure (ERMES) or MDM complex, composed of MMM1, MDM10, MDM12 and MDM34. An MMM1 homodimer associates with one molecule of MDM12 on each side in a pairwise head-to-tail manner, and the SMP-LTD domains of MMM1 and MDM12 generate a continuous hydrophobic tunnel for phospholipid trafficking.

It localises to the endoplasmic reticulum membrane. Functionally, component of the ERMES/MDM complex, which serves as a molecular tether to connect the endoplasmic reticulum (ER) and mitochondria. Components of this complex are involved in the control of mitochondrial shape and protein biogenesis, and function in nonvesicular lipid trafficking between the ER and mitochondria. The MDM12-MMM11 subcomplex functions in the major beta-barrel assembly pathway that is responsible for biogenesis of all outer membrane beta-barrel proteins, and acts in a late step after the SAM complex. The MDM10-MDM12-MMM1 subcomplex further acts in the TOM40-specific pathway after the action of the MDM12-MMM1 complex. Essential for establishing and maintaining the structure of mitochondria and maintenance of mtDNA nucleoids. The protein is Maintenance of mitochondrial morphology protein 1-1 of Yarrowia lipolytica (strain CLIB 122 / E 150) (Yeast).